Consider the following 270-residue polypeptide: Formamidopyrimidine-DNA glycosylase (270 aa).

The Schiff-base intermediate with DNA role is filled by P2. Catalysis depends on E3, which acts as the Proton donor. The active-site Proton donor; for beta-elimination activity is the K58. DNA is bound by residues H91, R110, and R151. An FPG-type zinc finger spans residues L236–R270. R260 serves as the catalytic Proton donor; for delta-elimination activity.

This sequence belongs to the FPG family. In terms of assembly, monomer. Zn(2+) serves as cofactor.

The catalysed reaction is Hydrolysis of DNA containing ring-opened 7-methylguanine residues, releasing 2,6-diamino-4-hydroxy-5-(N-methyl)formamidopyrimidine.. The enzyme catalyses 2'-deoxyribonucleotide-(2'-deoxyribose 5'-phosphate)-2'-deoxyribonucleotide-DNA = a 3'-end 2'-deoxyribonucleotide-(2,3-dehydro-2,3-deoxyribose 5'-phosphate)-DNA + a 5'-end 5'-phospho-2'-deoxyribonucleoside-DNA + H(+). Involved in base excision repair of DNA damaged by oxidation or by mutagenic agents. Acts as a DNA glycosylase that recognizes and removes damaged bases. Has a preference for oxidized purines, such as 7,8-dihydro-8-oxoguanine (8-oxoG). Has AP (apurinic/apyrimidinic) lyase activity and introduces nicks in the DNA strand. Cleaves the DNA backbone by beta-delta elimination to generate a single-strand break at the site of the removed base with both 3'- and 5'-phosphates. In Stenotrophomonas maltophilia (strain R551-3), this protein is Formamidopyrimidine-DNA glycosylase.